The chain runs to 883 residues: DNA mismatch repair protein MutS (883 aa).

Residue 633–640 (GPNMGGKS) coordinates ATP.

The protein belongs to the DNA mismatch repair MutS family.

Functionally, this protein is involved in the repair of mismatches in DNA. It is possible that it carries out the mismatch recognition step. This protein has a weak ATPase activity. The chain is DNA mismatch repair protein MutS from Bordetella parapertussis (strain 12822 / ATCC BAA-587 / NCTC 13253).